Here is an 847-residue protein sequence, read N- to C-terminus: MEKVTNSAAAKPQGNNKKQESAYNGTAKDKKKPNLDIETTDSDLLSDIHLDGTKEQKVQTLFSKVFEDTGPSTAKTADRKRRLQAEADANNNDTEKASKLAKTSVATTDMDLRVTRKQHTFYMKVQALLAEHAEKESTKKASKMAKISEADLILFMTQKEIEYYMKVKALIAKCAEEGSKLLDNWTSSKDIAKTADHERRLQAEADAKNNDTKKAGQSAKESVATTDMQLNVIKEQMEHCKKVQALLANESKGAEKESKVLDYSTGPSTSSKEAAAAKTADHERRLLAEADVNNNDTEKAGQSAMESVATQGASATERKQSFSLGLEHTSPIQVNGAALACPLVRKSLPPGEANSCPPPPKRDPAAVKSSVKIIKVKAPEEGNNNNDEKEMSTETSETHKTDSVEEGRRVVKWIIFPIKPNFFFKYFWEQTACLVQRTNPKYFQSLISFKMLDEILIRHHLDFTVNLDVTTYKNGKRETLNPEGRALPPAVWGFYSEGCSIRLLNPSAYLTRLREVCTVLQEFFHCKVEANMYLTPPNSQGFAPHYDDIEAFVIQVEGRKRWLLYEPPKEADHLARISSGNYDQEQLGKPIIDEVLSAGDVLYFPRGTVHQAITEEQQHSLHITLSVYQQQAYANLLETLMPMVLKKAVDRSVALRRGLPLHTFQVLGNAYKANDCGSRQLLVENVQKLVTKYLIPSEDDIDEAVDQMAKKFQHEALPPIVLPSEEVRTVHGARSGADEQGNCVCDYKFNEKTSVRLLRANILRLVTEPDGSVRIYHHADNGLDYCKYEPYFMEILPEEAKAVELLISAYPYYLTIDQLPLKSSARKVEVATALWEHGLLMTEKPFK.

The span at 1–24 (MEKVTNSAAAKPQGNNKKQESAYN) shows a compositional bias: polar residues. Disordered regions lie at residues 1 to 45 (MEKV…SDLL), 203 to 223 (AEAD…KESV), and 254 to 320 (AEKE…ERKQ). The segment covering 203–214 (AEADAKNNDTKK) has biased composition (basic and acidic residues). Residues 268 to 278 (STSSKEAAAAK) are compositionally biased toward low complexity. Residues 279–288 (TADHERRLLA) show a composition bias toward basic and acidic residues. Over residues 304–314 (AMESVATQGAS) the composition is skewed to polar residues. A Phosphoserine modification is found at serine 323. Threonine 329 carries the post-translational modification Phosphothreonine. At serine 330 the chain carries Phosphoserine. Residues 377 to 401 (KAPEEGNNNNDEKEMSTETSETHKT) form a disordered region. The segment covering 386-401 (NDEKEMSTETSETHKT) has biased composition (basic and acidic residues). Residues 499–644 (CSIRLLNPSA…NLLETLMPMV (146 aa)) enclose the JmjC domain. Fe cation is bound by residues histidine 545, aspartate 547, and histidine 610.

Belongs to the ROX family. NO66 subfamily. The cofactor is Fe(2+).

The protein localises to the nucleus. It carries out the reaction N(6),N(6)-dimethyl-L-lysyl(36)-[histone H3] + 2 2-oxoglutarate + 2 O2 = L-lysyl(36)-[histone H3] + 2 formaldehyde + 2 succinate + 2 CO2. Oxygenase that can act as both a histone lysine demethylase and a ribosomal histidine hydroxylase. Specifically demethylates 'Lys-4' (H3K4me) and 'Lys-36' (H3K36me) of histone H3, thereby playing a central role in histone code. The chain is Bifunctional lysine-specific demethylase and histidyl-hydroxylase NO66 from Drosophila simulans (Fruit fly).